The chain runs to 356 residues: Probable butyrate kinase (356 aa).

Belongs to the acetokinase family.

It localises to the cytoplasm. The enzyme catalyses butanoate + ATP = butanoyl phosphate + ADP. The sequence is that of Probable butyrate kinase from Clostridium perfringens (strain SM101 / Type A).